Consider the following 122-residue polypeptide: Large ribosomal subunit protein uL14 (122 aa).

This sequence belongs to the universal ribosomal protein uL14 family. Part of the 50S ribosomal subunit. Forms a cluster with proteins L3 and L19. In the 70S ribosome, L14 and L19 interact and together make contacts with the 16S rRNA in bridges B5 and B8.

Functionally, binds to 23S rRNA. Forms part of two intersubunit bridges in the 70S ribosome. This is Large ribosomal subunit protein uL14 from Streptococcus equi subsp. equi (strain 4047).